The primary structure comprises 400 residues: Phosphoglycerate kinase (400 aa).

Substrate is bound by residues 22-24, Arg38, 61-64, Arg119, and Arg152; these read DFN and HLGR. ATP is bound by residues Lys205, Gly296, Glu327, and 353-356; that span reads GGDT.

This sequence belongs to the phosphoglycerate kinase family. Monomer.

The protein resides in the cytoplasm. It carries out the reaction (2R)-3-phosphoglycerate + ATP = (2R)-3-phospho-glyceroyl phosphate + ADP. The protein operates within carbohydrate degradation; glycolysis; pyruvate from D-glyceraldehyde 3-phosphate: step 2/5. The protein is Phosphoglycerate kinase of Campylobacter jejuni subsp. doylei (strain ATCC BAA-1458 / RM4099 / 269.97).